Reading from the N-terminus, the 396-residue chain is Probable glucan endo-1,6-beta-glucosidase B (396 aa).

Residues 1–17 (MIRRLAAFSALSGLATA) form the signal peptide. A glycan (N-linked (GlcNAc...) asparagine) is linked at N30. Catalysis depends on E219, which acts as the Proton donor. N272 carries N-linked (GlcNAc...) asparagine glycosylation. Catalysis depends on E320, which acts as the Nucleophile.

The protein belongs to the glycosyl hydrolase 5 (cellulase A) family.

Its subcellular location is the secreted. It carries out the reaction Random hydrolysis of (1-&gt;6)-linkages in (1-&gt;6)-beta-D-glucans.. Beta-glucanases participate in the metabolism of beta-glucan, the main structural component of the cell wall. Acts on lutean, pustulan and 1,6-oligo-beta-D-glucosides. This Aspergillus fumigatus (strain CBS 144.89 / FGSC A1163 / CEA10) (Neosartorya fumigata) protein is Probable glucan endo-1,6-beta-glucosidase B (exgB).